The sequence spans 1318 residues: DNA-directed RNA polymerase subunit beta' (1318 aa).

Zn(2+)-binding residues include Cys-221, Cys-295, Cys-302, and Cys-305.

Belongs to the RNA polymerase beta' chain family. RpoC2 subfamily. In terms of assembly, in cyanobacteria the RNAP catalytic core is composed of 2 alpha, 1 beta, 1 beta', 1 gamma and 1 omega subunit. When a sigma factor is associated with the core the holoenzyme is formed, which can initiate transcription. Zn(2+) is required as a cofactor.

The catalysed reaction is RNA(n) + a ribonucleoside 5'-triphosphate = RNA(n+1) + diphosphate. In terms of biological role, DNA-dependent RNA polymerase catalyzes the transcription of DNA into RNA using the four ribonucleoside triphosphates as substrates. In Synechococcus elongatus (strain ATCC 33912 / PCC 7942 / FACHB-805) (Anacystis nidulans R2), this protein is DNA-directed RNA polymerase subunit beta'.